A 355-amino-acid chain; its full sequence is Peptide chain release factor 1 (355 aa).

Position 233 is an N5-methylglutamine (glutamine 233).

This sequence belongs to the prokaryotic/mitochondrial release factor family. Post-translationally, methylated by PrmC. Methylation increases the termination efficiency of RF1.

Its subcellular location is the cytoplasm. Functionally, peptide chain release factor 1 directs the termination of translation in response to the peptide chain termination codons UAG and UAA. This Desulforudis audaxviator (strain MP104C) protein is Peptide chain release factor 1.